Reading from the N-terminus, the 335-residue chain is Nucleoid-associated protein YejK (335 aa).

Belongs to the YejK family.

The protein localises to the cytoplasm. The protein resides in the nucleoid. The chain is Nucleoid-associated protein YejK from Salmonella schwarzengrund (strain CVM19633).